We begin with the raw amino-acid sequence, 147 residues long: Small ribosomal subunit protein bS6 (147 aa).

Residues 114-147 (GKGTRAAEQAAAAEAAAPAAAPAEPASAEPAPAV) are disordered. Residues 119 to 147 (AAEQAAAAEAAAPAAAPAEPASAEPAPAV) show a composition bias toward low complexity.

Belongs to the bacterial ribosomal protein bS6 family.

In terms of biological role, binds together with bS18 to 16S ribosomal RNA. This Koribacter versatilis (strain Ellin345) protein is Small ribosomal subunit protein bS6.